Here is a 60-residue protein sequence, read N- to C-terminus: Large ribosomal subunit protein bL32 (60 aa).

A disordered region spans residues 1–60 (MAVQQNKKTPSKRGMHRSHDFLVAPQLSVEPTTGETHMRHHISPNGFYRGRKVLKTKNDE). A compositionally biased stretch (basic residues) spans 49–60 (RGRKVLKTKNDE).

Belongs to the bacterial ribosomal protein bL32 family.

The sequence is that of Large ribosomal subunit protein bL32 from Janthinobacterium sp. (strain Marseille) (Minibacterium massiliensis).